The sequence spans 491 residues: Cytochrome P450 2B4 (491 aa).

At serine 128 the chain carries Phosphoserine; by PKA. Cysteine 436 provides a ligand contact to heme.

This sequence belongs to the cytochrome P450 family. Heme serves as cofactor.

It is found in the endoplasmic reticulum membrane. The protein resides in the microsome membrane. The enzyme catalyses an organic molecule + reduced [NADPH--hemoprotein reductase] + O2 = an alcohol + oxidized [NADPH--hemoprotein reductase] + H2O + H(+). Functionally, cytochromes P450 are a group of heme-thiolate monooxygenases. In liver microsomes, this enzyme is involved in an NADPH-dependent electron transport pathway. It oxidizes a variety of structurally unrelated compounds, including steroids, fatty acids, and xenobiotics. In the epoxidation of arachidonic acid it has a unique preference for the 5,6-olefin. The sequence is that of Cytochrome P450 2B4 (CYP2B4) from Oryctolagus cuniculus (Rabbit).